A 930-amino-acid chain; its full sequence is Protein translocase subunit SecA (930 aa).

ATP is bound by residues glutamine 87, 105–109, and aspartate 515; that span reads GEGKT. Zn(2+)-binding residues include cysteine 914, cysteine 916, cysteine 925, and histidine 926.

The protein belongs to the SecA family. As to quaternary structure, monomer and homodimer. Part of the essential Sec protein translocation apparatus which comprises SecA, SecYEG and auxiliary proteins SecDF-YajC and YidC. Zn(2+) serves as cofactor.

The protein resides in the cell inner membrane. It is found in the cytoplasm. It carries out the reaction ATP + H2O + cellular proteinSide 1 = ADP + phosphate + cellular proteinSide 2.. Its function is as follows. Part of the Sec protein translocase complex. Interacts with the SecYEG preprotein conducting channel. Has a central role in coupling the hydrolysis of ATP to the transfer of proteins into and across the cell membrane, serving both as a receptor for the preprotein-SecB complex and as an ATP-driven molecular motor driving the stepwise translocation of polypeptide chains across the membrane. In Burkholderia vietnamiensis (strain G4 / LMG 22486) (Burkholderia cepacia (strain R1808)), this protein is Protein translocase subunit SecA.